We begin with the raw amino-acid sequence, 178 residues long: Zinc finger CCHC domain-containing protein 10 (178 aa).

Residues 21 to 38 (VRCQKCLEFGHWTYECKG) form a CCHC-type zinc finger. The disordered stretch occupies residues 66–178 (QSIGETNIEK…EPQKKKKKKK (113 aa)). Composition is skewed to low complexity over residues 85–113 (SVTS…SSSS) and 121–164 (SLSS…SSES).

This Mus musculus (Mouse) protein is Zinc finger CCHC domain-containing protein 10 (Zcchc10).